Consider the following 240-residue polypeptide: tRNA1(Val) (adenine(37)-N6)-methyltransferase (240 aa).

Belongs to the methyltransferase superfamily. tRNA (adenine-N(6)-)-methyltransferase family.

It is found in the cytoplasm. It catalyses the reaction adenosine(37) in tRNA1(Val) + S-adenosyl-L-methionine = N(6)-methyladenosine(37) in tRNA1(Val) + S-adenosyl-L-homocysteine + H(+). Functionally, specifically methylates the adenine in position 37 of tRNA(1)(Val) (anticodon cmo5UAC). The polypeptide is tRNA1(Val) (adenine(37)-N6)-methyltransferase (Christiangramia forsetii (strain DSM 17595 / CGMCC 1.15422 / KT0803) (Gramella forsetii)).